Here is a 456-residue protein sequence, read N- to C-terminus: Enolase (456 aa).

Gln-177 serves as a coordination point for (2R)-2-phosphoglycerate. Glu-219 acts as the Proton donor in catalysis. Mg(2+) contacts are provided by Asp-256, Glu-310, and Asp-337. Residues Lys-362, Arg-391, Ser-392, and Lys-413 each coordinate (2R)-2-phosphoglycerate. Lys-362 serves as the catalytic Proton acceptor.

The protein belongs to the enolase family. Homodimer. Mg(2+) is required as a cofactor.

It localises to the cytoplasm. The protein resides in the secreted. It is found in the cell surface. The catalysed reaction is (2R)-2-phosphoglycerate = phosphoenolpyruvate + H2O. It functions in the pathway carbohydrate degradation; glycolysis; pyruvate from D-glyceraldehyde 3-phosphate: step 4/5. In terms of biological role, catalyzes the reversible conversion of 2-phosphoglycerate (2-PG) into phosphoenolpyruvate (PEP). It is essential for the degradation of carbohydrates via glycolysis. 'Moonlights' as a plasminogen receptor. Binds plasminogen, but no fibronectin binding was observed. Plasminogen binding increases bacterial adherence to host cells; plasmin activity leads to degradation of host extracellular matrix proteins, facilitating bacterial dissemination and disease spread. This is Enolase from Mycoplasma pneumoniae (strain ATCC 29342 / M129 / Subtype 1) (Mycoplasmoides pneumoniae).